A 69-amino-acid chain; its full sequence is Alpha-conotoxin-like Tx1 (69 aa).

An N-terminal signal peptide occupies residues 1–21 (MGMRMMFVVFLLVVLASTVVS). Positions 22–49 (STSGRRAFHGRNAAAKASGLVSLTDRRP) are excised as a propeptide. 2 disulfides stabilise this stretch: cysteine 51–cysteine 57 and cysteine 52–cysteine 65. The interval 53–55 (SDP) is ser-Xaa-Pro motif, crucial for potent interaction with nAChR. Position 66 is a glycine amide (glycine 66).

The protein belongs to the conotoxin A superfamily. Expressed by the venom duct.

Its subcellular location is the secreted. Its function is as follows. Alpha-conotoxins act on postsynaptic membranes, they bind to the nicotinic acetylcholine receptors (nAChR) and thus inhibit them. This is Alpha-conotoxin-like Tx1 from Conus textile (Cloth-of-gold cone).